The primary structure comprises 540 residues: Sensory neuron membrane protein 1 (540 aa).

At 1–105 the chain is on the cytoplasmic side; sequence MRTDDPVIGN…WIFRPDLSKP (105 aa). A helical transmembrane segment spans residues 106-126; sequence LTGDEMITIPHPLILGALLMV. Over 127–436 the chain is Extracellular; that stretch reads QRDREAMMPL…YTLFLGLRFN (310 aa). N-linked (GlcNAc...) asparagine glycans are attached at residues Asn-193 and Asn-206. 3 cysteine pairs are disulfide-bonded: Cys-245–Cys-310, Cys-274–Cys-330, and Cys-312–Cys-319. Asn-418 is a glycosylation site (N-linked (GlcNAc...) asparagine). Residues 437–457 traverse the membrane as a helical segment; the sequence is TAVKWLTIIIGTIGTIVGGFM. At 458–540 the chain is on the cytoplasmic side; the sequence is HYKRTTKMVN…VTVTEMQERY (83 aa).

The protein belongs to the CD36 family.

It is found in the cell membrane. In terms of biological role, plays an olfactory role that is not restricted to pheromone sensitivity. The chain is Sensory neuron membrane protein 1 from Aedes aegypti (Yellowfever mosquito).